A 302-amino-acid chain; its full sequence is NAD kinase 1 (302 aa).

Aspartate 67 functions as the Proton acceptor in the catalytic mechanism. Residues 67–68 (DG), arginine 72, 148–149 (ND), lysine 178, and aspartate 180 each bind NAD(+).

This sequence belongs to the NAD kinase family. A divalent metal cation is required as a cofactor.

The protein localises to the cytoplasm. It catalyses the reaction NAD(+) + ATP = ADP + NADP(+) + H(+). Functionally, involved in the regulation of the intracellular balance of NAD and NADP, and is a key enzyme in the biosynthesis of NADP. Catalyzes specifically the phosphorylation on 2'-hydroxyl of the adenosine moiety of NAD to yield NADP. This is NAD kinase 1 from Prochlorococcus marinus (strain NATL2A).